The following is a 156-amino-acid chain: Small ribosomal subunit protein uS7 (156 aa).

It belongs to the universal ribosomal protein uS7 family. Part of the 30S ribosomal subunit. Contacts proteins S9 and S11.

One of the primary rRNA binding proteins, it binds directly to 16S rRNA where it nucleates assembly of the head domain of the 30S subunit. Is located at the subunit interface close to the decoding center, probably blocks exit of the E-site tRNA. The protein is Small ribosomal subunit protein uS7 of Brachyspira hyodysenteriae (strain ATCC 49526 / WA1).